The primary structure comprises 350 residues: Methionine import ATP-binding protein MetN (350 aa).

The ABC transporter domain occupies 2 to 241 (IQIKNLKKEY…PQAPVTRSFV (240 aa)). ATP is bound at residue 38 to 45 (GHSGAGKS).

It belongs to the ABC transporter superfamily. Methionine importer (TC 3.A.1.24) family. In terms of assembly, the complex is composed of two ATP-binding proteins (MetN), two transmembrane proteins (MetI) and a solute-binding protein (MetQ).

It is found in the cell inner membrane. It carries out the reaction L-methionine(out) + ATP + H2O = L-methionine(in) + ADP + phosphate + H(+). The enzyme catalyses D-methionine(out) + ATP + H2O = D-methionine(in) + ADP + phosphate + H(+). In terms of biological role, part of the ABC transporter complex MetNIQ involved in methionine import. Responsible for energy coupling to the transport system. This Francisella tularensis subsp. tularensis (strain SCHU S4 / Schu 4) protein is Methionine import ATP-binding protein MetN.